The sequence spans 300 residues: Free fatty acid receptor 1 (300 aa).

Residues 1 to 8 (MALSPQLF) lie on the Extracellular side of the membrane. Residues 9-31 (FALYVSAFALGFPLNLLAIRGAV) form a helical membrane-spanning segment. At 32 to 41 (ARARLRLTPN) the chain is on the cytoplasmic side. The helical transmembrane segment at 42–64 (LVYTLHLACSDLLLAITLPVKAV) threads the bilayer. The Extracellular portion of the chain corresponds to 65 to 79 (EALASGAWPLPLPLC). A disulfide bond links Cys79 and Cys170. A helical transmembrane segment spans residues 80–101 (PVFVLVHFAPLYAGGGFLAALS). Residues 102 to 121 (AGRYLGAAFPFGYQAVRRPR) lie on the Cytoplasmic side of the membrane. The chain crosses the membrane as a helical span at residues 122–142 (YSWGVCVAIWALVLCHMGLVL). Topologically, residues 143–178 (GLEAPGGWLNTTSSSLGINTPVNGSPVCLEAWDPNS) are extracellular. Asn152 is a glycosylation site (N-linked (GlcNAc...) asparagine). The helical transmembrane segment at 179–200 (ARPARLSFSILLFFVPLVITAF) threads the bilayer. At 201-223 (CYVGCLRALAHSGLSHKRKLRAA) the chain is on the cytoplasmic side. Residues 224–248 (WAAGGAFLTLLLCLGPYNASNVASF) traverse the membrane as a helical segment. The Extracellular portion of the chain corresponds to 249-256 (VNPDLGGS). Residues 257 to 279 (WRKLGLITGSWSVVLNPLVTGYL) form a helical membrane-spanning segment. Residues 280 to 300 (GASPGRGTVCTTRTQGGTIQK) lie on the Cytoplasmic side of the membrane.

It belongs to the G-protein coupled receptor 1 family.

The protein resides in the cell membrane. Its function is as follows. G-protein coupled receptor for medium and long chain saturated and unsaturated fatty acids that plays an important role in glucose homeostasis. Fatty acid binding increases glucose-stimulated insulin secretion, and may also enhance the secretion of glucagon-like peptide 1 (GLP-1). May also play a role in bone homeostasis; receptor signaling activates pathways that inhibit osteoclast differentiation. Ligand binding leads to a conformation change that triggers signaling via G-proteins that activate phospholipase C, leading to an increase of the intracellular calcium concentration. Seems to act through a G(q) and G(i)-mediated pathway. Mediates the anti-inflammatory effects of omega-3 polyunsaturated fatty acids (PUFAs) via inhibition of NLRP3 inflammasome activation. The sequence is that of Free fatty acid receptor 1 (FFAR1) from Mesocricetus auratus (Golden hamster).